A 597-amino-acid chain; its full sequence is Elongation factor 4 (597 aa).

The 183-residue stretch at 2–184 (KHIRNFSIIA…TIVKSIPAPE (183 aa)) folds into the tr-type G domain. GTP is bound by residues 14-19 (DHGKST) and 131-134 (NKID).

This sequence belongs to the TRAFAC class translation factor GTPase superfamily. Classic translation factor GTPase family. LepA subfamily.

Its subcellular location is the cell inner membrane. It catalyses the reaction GTP + H2O = GDP + phosphate + H(+). Functionally, required for accurate and efficient protein synthesis under certain stress conditions. May act as a fidelity factor of the translation reaction, by catalyzing a one-codon backward translocation of tRNAs on improperly translocated ribosomes. Back-translocation proceeds from a post-translocation (POST) complex to a pre-translocation (PRE) complex, thus giving elongation factor G a second chance to translocate the tRNAs correctly. Binds to ribosomes in a GTP-dependent manner. The chain is Elongation factor 4 from Aliivibrio fischeri (strain ATCC 700601 / ES114) (Vibrio fischeri).